A 616-amino-acid polypeptide reads, in one-letter code: Dihydroxy-acid dehydratase (616 aa).

Residue Asp81 participates in Mg(2+) binding. Residue Cys122 participates in [2Fe-2S] cluster binding. Mg(2+)-binding residues include Asp123 and Lys124. An N6-carboxylysine modification is found at Lys124. A [2Fe-2S] cluster-binding site is contributed by Cys195. Glu491 is a Mg(2+) binding site. Ser517 acts as the Proton acceptor in catalysis.

It belongs to the IlvD/Edd family. As to quaternary structure, homodimer. [2Fe-2S] cluster is required as a cofactor. The cofactor is Mg(2+).

It carries out the reaction (2R)-2,3-dihydroxy-3-methylbutanoate = 3-methyl-2-oxobutanoate + H2O. The enzyme catalyses (2R,3R)-2,3-dihydroxy-3-methylpentanoate = (S)-3-methyl-2-oxopentanoate + H2O. It functions in the pathway amino-acid biosynthesis; L-isoleucine biosynthesis; L-isoleucine from 2-oxobutanoate: step 3/4. It participates in amino-acid biosynthesis; L-valine biosynthesis; L-valine from pyruvate: step 3/4. Functions in the biosynthesis of branched-chain amino acids. Catalyzes the dehydration of (2R,3R)-2,3-dihydroxy-3-methylpentanoate (2,3-dihydroxy-3-methylvalerate) into 2-oxo-3-methylpentanoate (2-oxo-3-methylvalerate) and of (2R)-2,3-dihydroxy-3-methylbutanoate (2,3-dihydroxyisovalerate) into 2-oxo-3-methylbutanoate (2-oxoisovalerate), the penultimate precursor to L-isoleucine and L-valine, respectively. The protein is Dihydroxy-acid dehydratase of Escherichia coli O7:K1 (strain IAI39 / ExPEC).